Consider the following 388-residue polypeptide: tRNA (guanine(26)-N(2))-dimethyltransferase (388 aa).

One can recognise a Trm1 methyltransferase domain in the interval 4-383 (KTIVEGTTKV…APITEIKEII (380 aa)). 4 residues coordinate S-adenosyl-L-methionine: R41, R78, D94, and A123. Residues C251, C254, C271, and C274 each contribute to the Zn(2+) site.

This sequence belongs to the class I-like SAM-binding methyltransferase superfamily. Trm1 family.

It carries out the reaction guanosine(26) in tRNA + 2 S-adenosyl-L-methionine = N(2)-dimethylguanosine(26) in tRNA + 2 S-adenosyl-L-homocysteine + 2 H(+). Dimethylates a single guanine residue at position 26 of a number of tRNAs using S-adenosyl-L-methionine as donor of the methyl groups. The polypeptide is tRNA (guanine(26)-N(2))-dimethyltransferase (Methanosarcina barkeri (strain Fusaro / DSM 804)).